Reading from the N-terminus, the 149-residue chain is Transcriptional repressor NrdR (149 aa).

The segment at 3-34 (CPFCSAVDTKVIDSRLVGEGSQVRRRRQCLVC) is a zinc-finger region. The ATP-cone domain occupies 49 to 139 (PRVIKSNEVR…VYRSFEDIRE (91 aa)).

This sequence belongs to the NrdR family. Requires Zn(2+) as cofactor.

In terms of biological role, negatively regulates transcription of bacterial ribonucleotide reductase nrd genes and operons by binding to NrdR-boxes. This Pectobacterium carotovorum subsp. carotovorum (strain PC1) protein is Transcriptional repressor NrdR.